Here is a 550-residue protein sequence, read N- to C-terminus: Glucose-6-phosphate isomerase 2 (550 aa).

Glutamate 359 functions as the Proton donor in the catalytic mechanism. Catalysis depends on residues histidine 390 and lysine 514.

Belongs to the GPI family.

The protein localises to the cytoplasm. It carries out the reaction alpha-D-glucose 6-phosphate = beta-D-fructose 6-phosphate. It participates in carbohydrate biosynthesis; gluconeogenesis. The protein operates within carbohydrate degradation; glycolysis; D-glyceraldehyde 3-phosphate and glycerone phosphate from D-glucose: step 2/4. Functionally, catalyzes the reversible isomerization of glucose-6-phosphate to fructose-6-phosphate. The protein is Glucose-6-phosphate isomerase 2 of Streptomyces avermitilis (strain ATCC 31267 / DSM 46492 / JCM 5070 / NBRC 14893 / NCIMB 12804 / NRRL 8165 / MA-4680).